The chain runs to 64 residues: Small ribosomal subunit protein eS17 (64 aa).

This sequence belongs to the eukaryotic ribosomal protein eS17 family.

This is Small ribosomal subunit protein eS17 from Methanosarcina acetivorans (strain ATCC 35395 / DSM 2834 / JCM 12185 / C2A).